The sequence spans 524 residues: Beta-glucosidase 21 (524 aa).

An N-terminal signal peptide occupies residues 1-24; sequence MALQKFPLMGLLLLLTILVSVTTA. Q55 provides a ligand contact to a beta-D-glucoside. Residue N61 is glycosylated (N-linked (GlcNAc...) asparagine). Residues H158 and 203–204 contribute to the a beta-D-glucoside site; that span reads NE. The Proton donor role is filled by E204. C223 and C230 are disulfide-bonded. A beta-D-glucoside is bound by residues Y346, E418, W468, 475 to 476, and F484; that span reads EW. E418 functions as the Nucleophile in the catalytic mechanism. Residue N494 is glycosylated (N-linked (GlcNAc...) asparagine). The Prevents secretion from ER motif lies at 521 to 524; sequence RDEL.

It belongs to the glycosyl hydrolase 1 family. Component of the PYK10 complex, at least composed of PYK10/BGLU23, BGLU21, BGLU22, JAL22, JAL23, PBP1/JAL30, PBP2/JAL31, JAL32, JAL33, JAL34, JAL35, GLL22 and GLL23. In terms of tissue distribution, expressed exclusively in roots.

Its subcellular location is the endoplasmic reticulum lumen. It catalyses the reaction Hydrolysis of terminal, non-reducing beta-D-glucosyl residues with release of beta-D-glucose.. Activated upon binding to PBP1 or PBP2. Its function is as follows. Beta-D-glucosidase active on scopolin &gt;&gt; esculin &gt;&gt; 4-MU-glucoside &gt; DIMBOA-glucoside. No activity with pNP-glucoside, oNP-glucoside and sinigrin as substrates. This is Beta-glucosidase 21 from Arabidopsis thaliana (Mouse-ear cress).